We begin with the raw amino-acid sequence, 327 residues long: MYNLRNRSFLNLLDFTSKDIKYLLDLSINLKKSKYAGIEVQKLKGKNIVIIFEKDSTRTRCAFEIAAYDQGANITYLGSKGNQMGSKESMIDTARVLGRMYDAIGFRGFSQQTVECLANYSNVPVYNGLTDISHPTQILADLMTIKEHKGSLKGIKIVFCGDGRGNVANSLLKGCAIMGLDFRIFAPKELFPDPDLTLKARSLALESGGKITITDSKEEAVKCADVVYTDVWVSMGESNWEDRINLLKAYQVNKEIMCMAKDDAIFMHCLPAFHDLNTVIGKDIFDKYGLDGIEVTEEIFESKNSVVFDVAENRVHTIKAIMVSTLG.

Carbamoyl phosphate contacts are provided by residues 56–59 (STRT), Q83, R107, and 134–137 (HPTQ). L-ornithine-binding positions include N166, D230, and 234 to 235 (SM). Residues 269 to 270 (CL) and R314 contribute to the carbamoyl phosphate site.

This sequence belongs to the aspartate/ornithine carbamoyltransferase superfamily. OTCase family.

The protein resides in the cytoplasm. It catalyses the reaction carbamoyl phosphate + L-ornithine = L-citrulline + phosphate + H(+). The protein operates within amino-acid degradation; L-arginine degradation via ADI pathway; carbamoyl phosphate from L-arginine: step 2/2. In terms of biological role, reversibly catalyzes the transfer of the carbamoyl group from carbamoyl phosphate (CP) to the N(epsilon) atom of ornithine (ORN) to produce L-citrulline. The chain is Ornithine carbamoyltransferase from Borreliella burgdorferi (strain ZS7) (Borrelia burgdorferi).